Here is a 656-residue protein sequence, read N- to C-terminus: MANLYSKKVRKSIRKFIRSGLNFDLLHEKHGRRLIINNIFVKLPPKYYNFAKGLDLNNILAFDSEIIQLNDLKKLIMRLPLLPDCFTDVISCHKKYLLSDAAIVNKLINSNMVSLSDIRNIIDNRIKTPVEIALLNSSLVIPGTPFSLDEVKYIFENTSAENVKELYKRIETPIHSVLYMEEKFSISPVHSSLYQVTDVDKIIYLIKKYPDDDIIDYVNGIVKSKKDFIESIITIIKDRLPDISPCLNKWISTQLPPDKLRDEFGIYFYALFEWIDIPLYIDKYLFLNITEDETKFICRYIDIYKKKSELFVNAFRWHLYYCNSMYPQKVFPVITYKQDSKEKYVVKESFKYLDNKQTMKVLLNDFKYNYAIGKYILDSSSSNEVKMDALNMLQKQVVCLENAKCFDLGNLYSVLIKFQYHPVDYVMYSDKLLDYMSKNSTFDNNDIGLLTLASFLFSTAKKGIIDINFLNTNSLWSPLMYLIDDSCKVDFTRFMMATKNIKADNINYLKNKDENINNNFEHIDNIDIYKLLDYSRIKLYGINFIKKVILANVIFEYIFTLIIIRYQKTSYNLRSFLEMLLYRCLKGFGISPKLYKNVYVNEMNICCELENLINNYVVPFKTYGILMKLLITIFNNLNGISKHSFRIRVRKSKTLL.

Residues 544–564 traverse the membrane as a helical segment; it reads FIKKVILANVIFEYIFTLIII.

It belongs to the chordopoxvirinae O1 family.

The protein resides in the membrane. This chain is Protein O1 homolog, found in Vertebrata (FPV).